The sequence spans 575 residues: Electron transfer flavoprotein-ubiquinone oxidoreductase, mitochondrial (575 aa).

A mitochondrion-targeting transit peptide spans 1-33 (MQRVLRAAAAGIGHASGHRAPRWGAAAAAARWL). Position 44-58 (44-58 (VVVVGAGPAGLAAAI)) interacts with FAD. An intramembrane segment occupies 82 to 103 (VGAHVLSGNVFEPRALDELIPK). 2 residues coordinate a ubiquinone: Gly276 and Gly277. Residues 343 to 363 (IPNPVFPGGAIIGCSAGFLNV) lie within the membrane without spanning it. Residues Cys520, Cys544, Cys547, and Cys550 each contribute to the [4Fe-4S] cluster site. Residues 535 to 564 (QKLHINAQNCLHCKACDIKDPKQNIEWTVP) enclose the 4Fe-4S ferredoxin-type domain.

This sequence belongs to the ETF-QO/FixC family. [4Fe-4S] cluster is required as a cofactor. The cofactor is FAD.

Its subcellular location is the mitochondrion inner membrane. The enzyme catalyses a ubiquinone + reduced [electron-transfer flavoprotein] = a ubiquinol + oxidized [electron-transfer flavoprotein] + H(+). Functionally, accepts electrons from ETF and reduces ubiquinone. In Oryza sativa subsp. japonica (Rice), this protein is Electron transfer flavoprotein-ubiquinone oxidoreductase, mitochondrial.